Here is a 305-residue protein sequence, read N- to C-terminus: MSASVQSWTDRLDGAQAADVSALLGRATAADGTAPVSEQGVHAVSGAGGDGVRHLVETDADRIVGYAQLQPGHGEHPAMAELAVDPEARGRGIGGRLVAEVLSAGGPDTRVWAHGNLPAAQAVAQRLGLTGARELLQLRRPLAGAELPELVVLEGISLRVYRGVEDDPEVLRVNAAAFAWHPEQGSWTEREMAERRAEAWFDPAGLFMAFATSDEKRLLGFHWTKVHPKQGDEPAIGEVYVVAIGPDAQGRGLGRLLTLAGLHYLRDRGLGAVLLYVEGDNASALHTYDRLGFERFHTDVAYARA.

2 N-acetyltransferase domains span residues 10 to 154 (DRLD…VVLE) and 156 to 305 (ISLR…YARA). A 1D-myo-inositol 2-(L-cysteinylamino)-2-deoxy-alpha-D-glucopyranoside-binding site is contributed by E38. Residue 82-84 (LAV) coordinates acetyl-CoA. 3 residues coordinate 1D-myo-inositol 2-(L-cysteinylamino)-2-deoxy-alpha-D-glucopyranoside: E183, K225, and E238. Acetyl-CoA contacts are provided by residues 242–244 (VAI) and 249–255 (QGRGLGR). Position 276 (Y276) interacts with 1D-myo-inositol 2-(L-cysteinylamino)-2-deoxy-alpha-D-glucopyranoside. Acetyl-CoA is bound at residue 281–286 (NASALH).

It belongs to the acetyltransferase family. MshD subfamily. Monomer.

The catalysed reaction is 1D-myo-inositol 2-(L-cysteinylamino)-2-deoxy-alpha-D-glucopyranoside + acetyl-CoA = mycothiol + CoA + H(+). Functionally, catalyzes the transfer of acetyl from acetyl-CoA to desacetylmycothiol (Cys-GlcN-Ins) to form mycothiol. This chain is Mycothiol acetyltransferase, found in Rhodococcus opacus (strain B4).